A 417-amino-acid polypeptide reads, in one-letter code: Sterile alpha motif domain-containing protein 14 (417 aa).

Disordered stretches follow at residues 37 to 299 (LLAK…WQEA) and 388 to 417 (AAAEKERKAQEKAARQREKLRRREQEAKKS). The span at 40–49 (KGRRHRPSRS) shows a compositional bias: basic residues. A phosphoserine mark is found at S84 and S108. Positions 135–153 (AAASCSPPRSAPSSDSSPS) are enriched in low complexity. Residues 160–173 (RAEPHSEDDSRDAS) are compositionally biased toward basic and acidic residues. 2 positions are modified to phosphoserine: S173 and S179. 2 stretches are compositionally biased toward low complexity: residues 244-260 (SGKGSASSGSTTSPTCS) and 276-295 (STLSDDSTPPSSSPKIPSGP). S279 carries the phosphoserine modification. T283 carries the phosphothreonine modification. The SAM domain maps to 326 to 389 (WTSQQVGQWL…KRKLKEMAAA (64 aa)). Positions 377–417 (ALVKRKLKEMAAAAEKERKAQEKAARQREKLRRREQEAKKS) form a coiled coil. Residues 390-417 (AEKERKAQEKAARQREKLRRREQEAKKS) are compositionally biased toward basic and acidic residues.

This chain is Sterile alpha motif domain-containing protein 14 (SAMD14), found in Homo sapiens (Human).